The sequence spans 801 residues: Mitochondrial intermediate peptidase (801 aa).

The transit peptide at 1-41 (MKDQLLVPLRRRPWTCQKCLQRLQLPRHQTRRSFETAASPF) directs the protein to the mitochondrion. Residue His564 participates in Zn(2+) binding. Glu565 is an active-site residue. 2 residues coordinate Zn(2+): His568 and His571.

It belongs to the peptidase M3 family. Zn(2+) serves as cofactor.

It is found in the mitochondrion matrix. It catalyses the reaction Release of an N-terminal octapeptide as second stage of processing of some proteins imported into the mitochondrion.. In terms of biological role, cleaves proteins, imported into the mitochondrion, to their mature size. While most mitochondrial precursor proteins are processed to the mature form in one step by mitochondrial processing peptidase (MPP), the sequential cleavage by MIP of an octapeptide after initial processing by MPP is a required step for a subgroup of nuclear-encoded precursor proteins destined for the matrix or the inner membrane. The protein is Mitochondrial intermediate peptidase (oct1) of Aspergillus fumigatus (strain ATCC MYA-4609 / CBS 101355 / FGSC A1100 / Af293) (Neosartorya fumigata).